We begin with the raw amino-acid sequence, 842 residues long: Alanine--tRNA ligase (842 aa).

The Zn(2+) site is built by His549, His553, Cys650, and His654.

It belongs to the class-II aminoacyl-tRNA synthetase family. Zn(2+) serves as cofactor.

Its subcellular location is the cytoplasm. The catalysed reaction is tRNA(Ala) + L-alanine + ATP = L-alanyl-tRNA(Ala) + AMP + diphosphate. Functionally, catalyzes the attachment of alanine to tRNA(Ala) in a two-step reaction: alanine is first activated by ATP to form Ala-AMP and then transferred to the acceptor end of tRNA(Ala). Also edits incorrectly charged Ser-tRNA(Ala) and Gly-tRNA(Ala) via its editing domain. In Campylobacter jejuni subsp. doylei (strain ATCC BAA-1458 / RM4099 / 269.97), this protein is Alanine--tRNA ligase.